Reading from the N-terminus, the 497-residue chain is Probable malate:quinone oxidoreductase (497 aa).

Belongs to the MQO family. FAD is required as a cofactor.

The enzyme catalyses (S)-malate + a quinone = a quinol + oxaloacetate. It functions in the pathway carbohydrate metabolism; tricarboxylic acid cycle; oxaloacetate from (S)-malate (quinone route): step 1/1. This Hahella chejuensis (strain KCTC 2396) protein is Probable malate:quinone oxidoreductase.